A 213-amino-acid chain; its full sequence is Nickel-cobalt-cadmium resistance protein NccN (213 aa).

Transmembrane regions (helical) follow at residues 24–44 (IGIW…GHSQ), 48–68 (TWIS…ATVG), 113–133 (ESIT…PAVI), and 180–200 (NLAD…VELA).

It to A.eutrophus CzcN.

The protein resides in the cell inner membrane. In terms of biological role, component of the NCC cation-efflux system that confers resistance to nickel, cobalt and cadmium. Appears to be involved in metal specificity but affects only nickel resistance. May be involved in nickel transport. The protein is Nickel-cobalt-cadmium resistance protein NccN (nccN) of Alcaligenes xylosoxydans xylosoxydans (Achromobacter xylosoxidans).